A 369-amino-acid chain; its full sequence is Terpene cyclase DEP1 (369 aa).

8 consecutive transmembrane segments (helical) span residues 9-29 (FFYL…FNGM), 82-102 (LLFF…LIES), 118-138 (AMVL…LYLV), 157-177 (ALLV…VPAW), 190-210 (IALF…LASI), 234-254 (LVLA…GALI), 298-318 (LFSQ…SHLL), and 342-362 (LVYL…SFAL).

The protein belongs to the membrane-bound ascI terpene cyclase family.

It localises to the membrane. It functions in the pathway polyketide biosynthesis. Part of the gene cluster that mediates the biosynthesis of depudecin, a highly oxidized eleven-carbon linear polyketide that acts as a histone deacetylase (HDAC) inhibitor and makes a small contribution to pathogenesis. The reducing polyketide synthase DEP5 is the central enzyme in depudecin biosynthesis by yielding the backbone polyketide chain. The monooxygenases DEP2 and DEP4, as well as the uncharacterized protein DEP1, then act as tailoring enzymes to modify the intermediate polyketide chain into depudecin. This Alternaria brassicicola (Dark leaf spot agent) protein is Terpene cyclase DEP1.